The following is a 4128-amino-acid chain: DNA-dependent protein kinase catalytic subunit (4128 aa).

N6-acetyllysine is present on lysine 117. One copy of the HEAT 1 repeat lies at 288 to 323; that stretch reads DNYVSLFEVLLKWCAHTNVELKKAALSALESFLKQV. 2 positions are modified to phosphoserine: serine 511 and serine 687. Lysine 828 bears the N6-acetyllysine mark. 2 positions are modified to phosphoserine: serine 841 and serine 893. One copy of the HEAT 2 repeat lies at 1004 to 1040; the sequence is QDTVALLEAILDGIVDPVDSTLRDFCGRCIREFLKWS. Serine 1065 is modified (phosphoserine). Lysine 1209 carries the post-translational modification N6-acetyllysine. The tract at residues 1503–1538 is interaction with C1D; sequence LDLSCKQLASGLLELAFAFGGLCERLVSLLLNPAVL. Residues 1503-1538 are leucine-zipper; the sequence is LDLSCKQLASGLLELAFAFGGLCERLVSLLLNPAVL. The TPR 1 repeat unit spans residues 1723–1756; that stretch reads PMQSREFPPGTPRFNNYVDCMKKFLDALELSQSP. Lysine 1970 is modified (N6-acetyllysine). Residues 2050 to 2073 form a disordered region; it reads QSYSYSSQDPRPATGRFRRREQRD. Position 2056 is a phosphoserine; by autocatalysis (serine 2056). Lysine 2259 is subject to N6-acetyllysine. Positions 2436 to 3212 are KIP-binding; the sequence is LDIIYKMMPK…DNSMNVDQDG (777 aa). Threonine 2535 is modified (phosphothreonine). At threonine 2609 the chain carries Phosphothreonine; by autocatalysis. Residue serine 2612 is modified to Phosphoserine; by autocatalysis. Residues threonine 2638 and threonine 2647 each carry the phosphothreonine; by autocatalysis modification. Residues 2737–2765 are may split the end of the DNA molecule, with the two strands separating around the region; that stretch reads EKLSLMYARKGVAEQKREKEIKSELKMKQ. Serine 2789 carries the post-translational modification Phosphoserine. Positions 2906–3539 constitute an FAT domain; the sequence is PAKRVRGKAR…VYPFIISSES (634 aa). 2 TPR repeats span residues 2920–2948 and 2949–2982; these read VLRW…SEIG and TKQI…QDWV. The interval 3200–3222 is disordered; the sequence is LPEDNSMNVDQDGDPSDRMEVQE. Serine 3205 carries the post-translational modification Phosphoserine. N6-acetyllysine is present on residues lysine 3241, lysine 3260, lysine 3621, lysine 3638, and lysine 3642. One can recognise a PI3K/PI4K catalytic domain in the interval 3722–4053; that stretch reads FDERVTVMAS…ICYAKRKLAG (332 aa). Residues 3728 to 3734 are G-loop; that stretch reads VMASLRR. 2 positions are modified to phosphoserine: serine 3731 and serine 3821. The segment at 3919–3927 is catalytic loop; that stretch reads GIGDRHLNN. An activation loop region spans residues 3939 to 3964; that stretch reads GIDFGHAFGSATQFLPVPELMPFRLT. Serine 4026 is modified (phosphoserine). In terms of domain architecture, FATC spans 4096–4128; sequence SGLSEETQVKCLMDQATDPNILGRTWEGWEPWM.

It belongs to the PI3/PI4-kinase family. As to quaternary structure, DNA-PK is a heterotrimer of PRKDC and the Ku dimer (composed of XRCC6/Ku70 and XRCC5/Ku86). Formation of this complex may be promoted by interaction with ILF3. Component of the core long-range non-homologous end joining (NHEJ) complex (also named DNA-PK complex) composed of PRKDC, LIG4, XRCC4, XRCC6/Ku70, XRCC5/Ku86 and NHEJ1/XLF. Additional component of the NHEJ complex includes PAXX. Following autophosphorylation, PRKDC dissociates from DNA. Interacts with DNA-PKcs-interacting protein (KIP) with the region upstream the kinase domain. PRKDC alone also interacts with and phosphorylates DCLRE1C, thereby activating the latent endonuclease activity of this protein. Interacts with C1D. Interacts with TTI1 and TELO2. Interacts with CIB1. Interacts with SETX. Interacts with NR4A3; the DNA-dependent protein kinase complex DNA-PK phosphorylates and activates NR4A3 and prevents NR4A3 ubiquitination and degradation. Interacts with BRAT1. Part of the HDP-RNP complex composed of at least HEXIM1, PRKDC, XRCC5, XRCC6, paraspeckle proteins (SFPQ, NONO, PSPC1, RBM14, and MATR3) and NEAT1 RNA. Interacts with KAT5. Post-translationally, autophosphorylated at two clusters, the T2609 cluster and the S2056 cluster. Autophosphorylated on Ser-2056, Thr-2609, Thr-2638 and Thr-2647. Ser-2056 and Thr-2609 are DNA damage-inducible phosphorylation sites (inducible with ionizing radiation, IR) dephosphorylated by PPP5C. Autophosphorylation induces a conformational change that leads to remodeling of the DNA-PK complex, requisite for efficient end processing and DNA repair. Autophosphorylation in trans within DNA-PK complexes loaded on DNA ends leads to the dissociation of PRKDC from DNA and the transition into the short-range NHEJ complex. Autophosphorylation of the T2609 cluster is required for hematopoietic development and protein synthesis in erythrocytes precursors. S-nitrosylated by GAPDH. In terms of processing, polyubiquitinated by RNF144A, leading to proteasomal degradation.

It localises to the nucleus. The protein resides in the nucleolus. The protein localises to the cytoplasm. Its subcellular location is the cytosol. It carries out the reaction L-seryl-[protein] + ATP = O-phospho-L-seryl-[protein] + ADP + H(+). The catalysed reaction is L-threonyl-[protein] + ATP = O-phospho-L-threonyl-[protein] + ADP + H(+). With respect to regulation, activity seems to be attenuated by autophosphorylation. Binding to the SL1 region of U3 small nucleolar RNA promotes auto-phosphorylation activity. Inhibited by wortmannin. In terms of biological role, serine/threonine-protein kinase that acts as a molecular sensor for DNA damage. Involved in DNA non-homologous end joining (NHEJ) required for double-strand break (DSB) repair and V(D)J recombination. Must be bound to DNA to express its catalytic properties. Promotes processing of hairpin DNA structures in V(D)J recombination by activation of the hairpin endonuclease artemis (DCLRE1C). Recruited by XRCC5 and XRCC6 to DNA ends and is required to (1) protect and align broken ends of DNA, thereby preventing their degradation, (2) and sequester the DSB for repair by NHEJ. Acts as a scaffold protein to aid the localization of DNA repair proteins to the site of damage. The assembly of the DNA-PK complex at DNA ends is also required for the NHEJ ligation step. Found at the ends of chromosomes, suggesting a further role in the maintenance of telomeric stability and the prevention of chromosomal end fusion. Also involved in modulation of transcription. As part of the DNA-PK complex, involved in the early steps of ribosome assembly by promoting the processing of precursor rRNA into mature 18S rRNA in the small-subunit processome. Binding to U3 small nucleolar RNA, recruits PRKDC and XRCC5/Ku86 to the small-subunit processome. Recognizes the substrate consensus sequence [ST]-Q. Phosphorylates 'Ser-139' of histone variant H2AX, thereby regulating DNA damage response mechanism. Phosphorylates ASF1A, DCLRE1C, c-Abl/ABL1, histone H1, HSPCA, c-jun/JUN, p53/TP53, PARP1, POU2F1, DHX9, FH, SRF, NHEJ1/XLF, XRCC1, XRCC4, XRCC5, XRCC6, WRN, MYC and RFA2. Can phosphorylate C1D not only in the presence of linear DNA but also in the presence of supercoiled DNA. Ability to phosphorylate p53/TP53 in the presence of supercoiled DNA is dependent on C1D. Acts as a regulator of the phosphatidylinositol 3-kinase/protein kinase B signal transduction by mediating phosphorylation of 'Ser-473' of protein kinase B (PKB/AKT1, PKB/AKT2, PKB/AKT3), promoting their activation. Contributes to the determination of the circadian period length by antagonizing phosphorylation of CRY1 'Ser-588' and increasing CRY1 protein stability, most likely through an indirect mechanism. Plays a role in the regulation of DNA virus-mediated innate immune response by assembling into the HDP-RNP complex, a complex that serves as a platform for IRF3 phosphorylation and subsequent innate immune response activation through the cGAS-STING pathway. Also regulates the cGAS-STING pathway by catalyzing phosphorylation of CGAS, thereby impairing CGAS oligomerization and activation. Also regulates the cGAS-STING pathway by mediating phosphorylation of PARP1. This is DNA-dependent protein kinase catalytic subunit (PRKDC) from Homo sapiens (Human).